The sequence spans 145 residues: MFIETDYFGKIEINEAETITFVSEIPGFPDSKTFVLIPYGEDLPFWSLQSIEEQACAFVVTNPFWHKSDYAFELSDGAKDQLGIEEAEHVSVYSIVTLREPFESSTLNLKAPIVIETKERRGKQVILDDAYPARYPLGGTKAEVR.

It belongs to the FliW family. Interacts with translational regulator CsrA and flagellin(s).

The protein localises to the cytoplasm. Its function is as follows. Acts as an anti-CsrA protein, binds CsrA and prevents it from repressing translation of its target genes, one of which is flagellin. Binds to flagellin and participates in the assembly of the flagellum. In Exiguobacterium sp. (strain ATCC BAA-1283 / AT1b), this protein is Flagellar assembly factor FliW.